The following is a 104-amino-acid chain: Large ribosomal subunit protein uL24 (104 aa).

Belongs to the universal ribosomal protein uL24 family. As to quaternary structure, part of the 50S ribosomal subunit.

Its function is as follows. One of two assembly initiator proteins, it binds directly to the 5'-end of the 23S rRNA, where it nucleates assembly of the 50S subunit. Functionally, one of the proteins that surrounds the polypeptide exit tunnel on the outside of the subunit. In Bradyrhizobium sp. (strain BTAi1 / ATCC BAA-1182), this protein is Large ribosomal subunit protein uL24.